A 48-amino-acid chain; its full sequence is MGINKKDGQPQYAPSHLGTKPVKYKRNKGEKFHDKSNGHPIVMQTKGE.

Residues 1–48 form a disordered region; sequence MGINKKDGQPQYAPSHLGTKPVKYKRNKGEKFHDKSNGHPIVMQTKGE. Basic and acidic residues predominate over residues 27-37; sequence NKGEKFHDKSN.

Belongs to the SspN family.

The protein resides in the spore core. The chain is Small, acid-soluble spore protein N from Bacillus velezensis (strain DSM 23117 / BGSC 10A6 / LMG 26770 / FZB42) (Bacillus amyloliquefaciens subsp. plantarum).